The following is a 509-amino-acid chain: ATP synthase subunit alpha (509 aa).

169 to 176 (GDRQTGKT) lines the ATP pocket.

This sequence belongs to the ATPase alpha/beta chains family. F-type ATPases have 2 components, CF(1) - the catalytic core - and CF(0) - the membrane proton channel. CF(1) has five subunits: alpha(3), beta(3), gamma(1), delta(1), epsilon(1). CF(0) has three main subunits: a(1), b(2) and c(9-12). The alpha and beta chains form an alternating ring which encloses part of the gamma chain. CF(1) is attached to CF(0) by a central stalk formed by the gamma and epsilon chains, while a peripheral stalk is formed by the delta and b chains.

It localises to the cell inner membrane. It carries out the reaction ATP + H2O + 4 H(+)(in) = ADP + phosphate + 5 H(+)(out). Functionally, produces ATP from ADP in the presence of a proton gradient across the membrane. The alpha chain is a regulatory subunit. The chain is ATP synthase subunit alpha from Brucella melitensis biotype 1 (strain ATCC 23456 / CCUG 17765 / NCTC 10094 / 16M).